A 300-amino-acid chain; its full sequence is L-arabinolactonase (300 aa).

Residues E22, N156, and D205 each contribute to the a divalent metal cation site.

It belongs to the SMP-30/CGR1 family. Requires a divalent metal cation as cofactor.

The enzyme catalyses L-arabinono-1,4-lactone + H2O = L-arabinonate + H(+). In terms of biological role, catalyzes the cleavage of L-arabino-gamma-lactone to L-arabonate. Is involved in a degradation pathway of L-arabinose that allows A.brasilense to grow on L-arabinose as a sole carbon source. Can also use D-galactono-1,4-lactone as substrate in vitro; however, the enzyme is probably not involved in the metabolism of D-galactose in vivo. The protein is L-arabinolactonase (araB) of Azospirillum brasilense.